Reading from the N-terminus, the 65-residue chain is Photosystem II reaction center protein J (65 aa).

A helical membrane pass occupies residues 35 to 55 (LWLVATAGGIAVIFVLGIFFY).

Belongs to the PsbJ family. PSII is composed of 1 copy each of membrane proteins PsbA, PsbB, PsbC, PsbD, PsbE, PsbF, PsbH, PsbI, PsbJ, PsbK, PsbL, PsbM, PsbT, PsbX, PsbY, Psb30/Ycf12, peripheral proteins PsbO, CyanoQ (PsbQ), PsbU, PsbV and a large number of cofactors. It forms dimeric complexes.

The protein localises to the cellular thylakoid membrane. Functionally, one of the components of the core complex of photosystem II (PSII). PSII is a light-driven water:plastoquinone oxidoreductase that uses light energy to abstract electrons from H(2)O, generating O(2) and a proton gradient subsequently used for ATP formation. It consists of a core antenna complex that captures photons, and an electron transfer chain that converts photonic excitation into a charge separation. The chain is Photosystem II reaction center protein J from Prochlorococcus marinus (strain MIT 9312).